We begin with the raw amino-acid sequence, 284 residues long: 2-dehydro-3-deoxyphosphooctonate aldolase (284 aa).

It belongs to the KdsA family.

It localises to the cytoplasm. The enzyme catalyses D-arabinose 5-phosphate + phosphoenolpyruvate + H2O = 3-deoxy-alpha-D-manno-2-octulosonate-8-phosphate + phosphate. It functions in the pathway carbohydrate biosynthesis; 3-deoxy-D-manno-octulosonate biosynthesis; 3-deoxy-D-manno-octulosonate from D-ribulose 5-phosphate: step 2/3. It participates in bacterial outer membrane biogenesis; lipopolysaccharide biosynthesis. The protein is 2-dehydro-3-deoxyphosphooctonate aldolase of Escherichia coli O157:H7.